The sequence spans 449 residues: Heterogeneous nuclear ribonucleoprotein H2 (449 aa).

Residue M1 is modified to N-acetylmethionine. M2 bears the N-acetylmethionine; in Heterogeneous nuclear ribonucleoprotein H2, N-terminally processed mark. Positions 11-90 (FVVKVRGLPW…RYVEVFKSNS (80 aa)) constitute an RRM 1 domain. S23 bears the Phosphoserine mark. A Glycyl lysine isopeptide (Lys-Gly) (interchain with G-Cter in SUMO2) cross-link involves residue K35. Residues S54 and S63 each carry the phosphoserine modification. K87 is covalently cross-linked (Glycyl lysine isopeptide (Lys-Gly) (interchain with G-Cter in SUMO2)). Residue S90 is modified to Phosphoserine. K98 is covalently cross-linked (Glycyl lysine isopeptide (Lys-Gly) (interchain with G-Cter in SUMO2)). An RRM 2 domain is found at 111-188 (GFVRLRGLPF…RYIEIFKSSR (78 aa)). R233 carries the post-translational modification Dimethylated arginine; alternate. R233 is subject to Omega-N-methylarginine; alternate. A 1-1 repeat occupies 234 to 249 (GAYGGGYGGYDDYGGY). The interval 234–433 (GAYGGGYGGY…YGGQSSMSGY (200 aa)) is 2 X 16 AA Gly-rich approximate repeats. Y246 is modified (phosphotyrosine). Positions 289-364 (HCVHMRGLPY…RYVELFLNST (76 aa)) constitute an RRM 3 domain. S310 carries the phosphoserine modification. 3 consecutive repeat copies span residues 354 to 372 (HRYVELFLNSTAGTSGGAY), 374 to 392 (HSYVELFLNSTAGASGGAY), and 418 to 433 (GGYGGGYGGQSSMSGY). Residues 354–392 (HRYVELFLNSTAGTSGGAYDHSYVELFLNSTAGASGGAY) are 2 X 19 AA perfect repeats.

In terms of assembly, component of a ribonucleoprotein complex containing mRNAs and RNA-binding proteins including DDX5, HNRNPH2 and SRSF1 as well as splicing regulator ARVCF. Interacts with TXNL4/DIM1. In terms of tissue distribution, expressed ubiquitously.

The protein resides in the nucleus. It localises to the nucleoplasm. Its function is as follows. This protein is a component of the heterogeneous nuclear ribonucleoprotein (hnRNP) complexes which provide the substrate for the processing events that pre-mRNAs undergo before becoming functional, translatable mRNAs in the cytoplasm. Binds poly(RG). In Homo sapiens (Human), this protein is Heterogeneous nuclear ribonucleoprotein H2 (HNRNPH2).